The chain runs to 364 residues: Glutamate 5-kinase (364 aa).

Residue lysine 7 coordinates ATP. Substrate-binding residues include serine 47, aspartate 134, and asparagine 146. Residues 166-167 (TD) and 209-215 (TGGIKTK) contribute to the ATP site. One can recognise a PUA domain in the interval 274 to 349 (QGTLHVDDGA…NRIKSTQYPV (76 aa)).

It belongs to the glutamate 5-kinase family.

Its subcellular location is the cytoplasm. It carries out the reaction L-glutamate + ATP = L-glutamyl 5-phosphate + ADP. It participates in amino-acid biosynthesis; L-proline biosynthesis; L-glutamate 5-semialdehyde from L-glutamate: step 1/2. Catalyzes the transfer of a phosphate group to glutamate to form L-glutamate 5-phosphate. The protein is Glutamate 5-kinase of Prochlorococcus marinus (strain SARG / CCMP1375 / SS120).